Reading from the N-terminus, the 110-residue chain is Prothymosin alpha (110 aa).

Position 1 is an N-acetylmethionine (Met1). The tract at residues 1 to 110 (MSDAAVDTSS…TKKQKTDEDD (110 aa)) is disordered. The residue at position 2 (Ser2) is an N-acetylserine; in Prothymosin alpha, N-terminally processed. Ser2 carries the phosphoserine modification. Thr8 is subject to Phosphothreonine; by CK2. Ser9 and Ser10 each carry phosphoserine. Residues Thr13 and Thr14 each carry the phosphothreonine; by CK2 modification. The span at 13 to 31 (TTKDLKEKKEVVEEAENGR) shows a compositional bias: basic and acidic residues. The residue at position 15 (Lys15) is an N6-acetyllysine; alternate. Lys15 is subject to N6-succinyllysine; alternate. Residues 32–41 (EAPANGNANE) show a composition bias toward low complexity. The segment covering 42-83 (ENGEQEADNEVDEEEEEGGEEEEEEEEGDGEEEDGDEDEEAE) has biased composition (acidic residues). Over residues 100 to 110 (DTKKQKTDEDD) the composition is skewed to basic and acidic residues. Thr101 carries the post-translational modification Phosphothreonine. An N6-acetyllysine; alternate modification is found at Lys102. A Glycyl lysine isopeptide (Lys-Gly) (interchain with G-Cter in SUMO2); alternate cross-link involves residue Lys102. Thr106 carries the post-translational modification Phosphothreonine.

It belongs to the pro/parathymosin family. Interacts with NUPR1; regulates apoptotic process. Covalently linked to a small RNA of about 20 nucleotides.

The protein localises to the nucleus. Prothymosin alpha may mediate immune function by conferring resistance to certain opportunistic infections. This is Prothymosin alpha (PTMA) from Bos taurus (Bovine).